Reading from the N-terminus, the 109-residue chain is Hainantoxin-XVIII-4 (109 aa).

An N-terminal signal peptide occupies residues 1 to 18 (MKLSIIIIATSLVIAVVA). The propeptide occupies 19-46 (FPSKDSKAIENDKTEQRMEIVVQETARA). 3 disulfide bridges follow: Cys55-Cys68, Cys59-Cys108, and Cys61-Cys81.

This sequence belongs to the neurotoxin 25 family. F7 subfamily. Expressed by the venom gland.

It is found in the secreted. In terms of biological role, putative ion channel inhibitor. The protein is Hainantoxin-XVIII-4 of Cyriopagopus hainanus (Chinese bird spider).